The chain runs to 504 residues: Cytochrome P450 7A1 (504 aa).

A helical membrane pass occupies residues 4 to 24 (TSLIWGIAIAACCCLWLILGI). Cysteine 444 contacts heme.

The protein belongs to the cytochrome P450 family. It depends on heme as a cofactor. In terms of tissue distribution, detected in liver.

The protein resides in the endoplasmic reticulum membrane. The protein localises to the microsome membrane. It catalyses the reaction cholesterol + reduced [NADPH--hemoprotein reductase] + O2 = 7alpha-hydroxycholesterol + oxidized [NADPH--hemoprotein reductase] + H2O + H(+). It carries out the reaction 4beta-hydroxycholesterol + reduced [NADPH--hemoprotein reductase] + O2 = 4beta,7alpha-dihydroxycholesterol + oxidized [NADPH--hemoprotein reductase] + H2O + H(+). The catalysed reaction is lathosterol + reduced [NADPH--hemoprotein reductase] + O2 = 7alpha,8alpha-epoxy-5alpha-cholestan-3beta-ol + oxidized [NADPH--hemoprotein reductase] + H2O + H(+). The enzyme catalyses lathosterol + reduced [NADPH--hemoprotein reductase] + O2 = 5alpha-cholestan-7-oxo-3beta-ol + oxidized [NADPH--hemoprotein reductase] + H2O + H(+). It catalyses the reaction 7-dehydrocholesterol + reduced [NADPH--hemoprotein reductase] + O2 = 7-oxocholesterol + oxidized [NADPH--hemoprotein reductase] + H2O + H(+). It carries out the reaction (24S)-hydroxycholesterol + reduced [NADPH--hemoprotein reductase] + O2 = (24S)-7alpha-dihydroxycholesterol + oxidized [NADPH--hemoprotein reductase] + H2O + H(+). The catalysed reaction is (24R)-hydroxycholesterol + reduced [NADPH--hemoprotein reductase] + O2 = (24R)-7alpha-dihydroxycholesterol + oxidized [NADPH--hemoprotein reductase] + H2O + H(+). The protein operates within lipid metabolism; bile acid biosynthesis. It participates in steroid metabolism; cholesterol degradation. In terms of biological role, a cytochrome P450 monooxygenase involved in the metabolism of endogenous cholesterol and its oxygenated derivatives (oxysterols). Mechanistically, uses molecular oxygen inserting one oxygen atom into a substrate, and reducing the second into a water molecule, with two electrons provided by NADPH via cytochrome P450 reductase (CPR; NADPH-ferrihemoprotein reductase). Functions as a critical regulatory enzyme of bile acid biosynthesis and cholesterol homeostasis. Catalyzes the hydroxylation of carbon hydrogen bond at 7-alpha position of cholesterol, a rate-limiting step in cholesterol catabolism and bile acid biosynthesis. 7-alpha hydroxylates several oxysterols, including 4beta-hydroxycholesterol and 24-hydroxycholesterol. Catalyzes the oxidation of the 7,8 double bond of 7-dehydrocholesterol and lathosterol with direct and predominant formation of the 7-keto derivatives. This is Cytochrome P450 7A1 from Homo sapiens (Human).